Here is a 645-residue protein sequence, read N- to C-terminus: L-aspartate oxidase, chloroplastic (645 aa).

The N-terminal 70 residues, 1–70, are a transit peptide targeting the chloroplast; it reads MAALMNGFGS…RMRHKVGSIR (70 aa). Residues 92–95, lysine 114, 121–128, and aspartate 292 contribute to the FAD site; these read SGVA and NTNYAQGG. The Proton donor/acceptor role is filled by arginine 368. Residues glutamate 453 and 469-470 each bind FAD; that span reads SL.

This sequence belongs to the FAD-dependent oxidoreductase 2 family. NadB subfamily. The cofactor is FAD.

Its subcellular location is the plastid. The protein localises to the chloroplast. It catalyses the reaction L-aspartate + O2 = iminosuccinate + H2O2. Its pathway is cofactor biosynthesis; NAD(+) biosynthesis; iminoaspartate from L-aspartate (oxidase route): step 1/1. In terms of biological role, catalyzes the oxidation of L-aspartate to iminoaspartate. This is L-aspartate oxidase, chloroplastic from Oryza sativa subsp. japonica (Rice).